The primary structure comprises 379 residues: Very late expression factor 1 (379 aa).

The Tyr recombinase domain maps to 169–348 (VIDTILNFIN…YNIGLDETSS (180 aa)). Residues arginine 210, lysine 239, arginine 303, and histidine 326 contribute to the active site. Tyrosine 335 (O-(3'-phospho-DNA)-tyrosine intermediate) is an active-site residue. Acidic residues predominate over residues 346-358 (TSSEEENNNDDDD). Positions 346–379 (TSSEEENNNDDDDAQHNRNSSGSSGESLLYYRNE) are disordered. Residues 362–379 (NRNSSGSSGESLLYYRNE) are compositionally biased toward low complexity.

The protein belongs to the 'phage' integrase family.

Functionally, plays a role in nucleocapsid assembly and serves an essential function during the final stages of the DNA packaging process. Participates in the processing of branched DNA molecules at the late stages of viral genome replication. The polypeptide is Very late expression factor 1 (VLF-1) (Lepidoptera (butterflies and moths)).